The primary structure comprises 2278 residues: Protein Ycf2 (2278 aa).

Residue 1632 to 1639 coordinates ATP; that stretch reads GSIGTGRS.

It belongs to the Ycf2 family.

It is found in the plastid. It localises to the chloroplast stroma. In terms of biological role, probable ATPase of unknown function. Its presence in a non-photosynthetic plant (Epifagus virginiana) and experiments in tobacco indicate that it has an essential function which is probably not related to photosynthesis. The sequence is that of Protein Ycf2 from Solanum bulbocastanum (Wild potato).